The chain runs to 784 residues: Protein translocase subunit SecA 2 (784 aa).

ATP contacts are provided by residues Q94, 112 to 116 (GEGKT), and D501.

This sequence belongs to the SecA family. As to quaternary structure, monomer and homodimer. Part of the essential Sec protein translocation apparatus which comprises SecA, SecYEG and auxiliary proteins SecDF. Other proteins may also be involved.

It localises to the cell membrane. The protein localises to the cytoplasm. It catalyses the reaction ATP + H2O + cellular proteinSide 1 = ADP + phosphate + cellular proteinSide 2.. Functionally, part of the Sec protein translocase complex. Interacts with the SecYEG preprotein conducting channel. Has a central role in coupling the hydrolysis of ATP to the transfer of proteins into and across the cell membrane, serving as an ATP-driven molecular motor driving the stepwise translocation of polypeptide chains across the membrane. This is Protein translocase subunit SecA 2 from Mycolicibacterium smegmatis (strain ATCC 700084 / mc(2)155) (Mycobacterium smegmatis).